The chain runs to 339 residues: uncharacterized protein (339 aa).

It to bacterial alkanal monooxygenase alpha and beta chains.

This is an uncharacterized protein from Bacillus subtilis (strain 168).